We begin with the raw amino-acid sequence, 234 residues long: Phosphoribosylaminoimidazole-succinocarboxamide synthase (234 aa).

It belongs to the SAICAR synthetase family.

It carries out the reaction 5-amino-1-(5-phospho-D-ribosyl)imidazole-4-carboxylate + L-aspartate + ATP = (2S)-2-[5-amino-1-(5-phospho-beta-D-ribosyl)imidazole-4-carboxamido]succinate + ADP + phosphate + 2 H(+). Its pathway is purine metabolism; IMP biosynthesis via de novo pathway; 5-amino-1-(5-phospho-D-ribosyl)imidazole-4-carboxamide from 5-amino-1-(5-phospho-D-ribosyl)imidazole-4-carboxylate: step 1/2. This Streptococcus agalactiae serotype V (strain ATCC BAA-611 / 2603 V/R) protein is Phosphoribosylaminoimidazole-succinocarboxamide synthase.